Reading from the N-terminus, the 514-residue chain is Coiled-coil domain-containing protein 174 (514 aa).

Disordered stretches follow at residues 42–83 and 137–162; these read AKPK…DQSR and TLEK…PDEE. Residues 63–83 show a composition bias toward basic and acidic residues; sequence KRAEKDIEQKAEEDQTLDQSR. A coiled-coil region spans residues 66 to 98; sequence EKDIEQKAEEDQTLDQSRKKLEEKAKLYEKMTK. The segment covering 141–162 has biased composition (acidic residues); that stretch reads ETDDEEIEPEMEIPPPEDPDEE. Coiled-coil stretches lie at residues 203-227 and 266-321; these read LLSE…ALRK and LDML…LENG. 2 disordered regions span residues 270–291 and 306–490; these read REQT…KAAL and LREE…PSAH. Basic and acidic residues-rich tracts occupy residues 335-354 and 376-388; these read EVPR…RDTK and KKQE…RDPE. The span at 405–418 shows a compositional bias: polar residues; the sequence is YSSQNLNSPETSPG. Basic and acidic residues predominate over residues 420-429; that stretch reads TEPEISENQK.

The protein localises to the nucleus. Functionally, probably involved in neuronal development. This chain is Coiled-coil domain-containing protein 174 (CCDC174), found in Gallus gallus (Chicken).